The following is a 116-amino-acid chain: Acyl-CoA-binding protein homolog 3 (116 aa).

The ACB domain maps to 3–92; that stretch reads LQEKFDAAVE…LNDMFDKIAE (90 aa). Residues 34-38, lysine 60, and tyrosine 79 contribute to the an acyl-CoA site; that span reads YSLFK.

Belongs to the ACBP family.

Functionally, binds medium- and long-chain acyl-CoA esters with very high affinity and may function as an intracellular carrier of acyl-CoA esters. The polypeptide is Acyl-CoA-binding protein homolog 3 (acbp-3) (Caenorhabditis elegans).